The sequence spans 461 residues: Bifunctional protein GlmU (461 aa).

Residues 1 to 230 (MECLMAVILA…SSEILGINDR (230 aa)) form a pyrophosphorylase region. Residues 9-12 (LAAG), lysine 23, glutamine 73, 78-79 (GT), 101-103 (YGD), glycine 140, glutamate 155, asparagine 170, and asparagine 228 each bind UDP-N-acetyl-alpha-D-glucosamine. Aspartate 103 contacts Mg(2+). Position 228 (asparagine 228) interacts with Mg(2+). Positions 231–251 (VQLAEAGRIIRSRILKRHMKN) are linker. The N-acetyltransferase stretch occupies residues 252–461 (GVTIIDPDST…KKGMLRQEKE (210 aa)). Residues arginine 333 and lysine 351 each coordinate UDP-N-acetyl-alpha-D-glucosamine. Histidine 363 functions as the Proton acceptor in the catalytic mechanism. The UDP-N-acetyl-alpha-D-glucosamine site is built by tyrosine 366 and asparagine 377. Residues 386 to 387 (NY), alanine 423, and arginine 440 contribute to the acetyl-CoA site.

The protein in the N-terminal section; belongs to the N-acetylglucosamine-1-phosphate uridyltransferase family. It in the C-terminal section; belongs to the transferase hexapeptide repeat family. As to quaternary structure, homotrimer. It depends on Mg(2+) as a cofactor.

The protein localises to the cytoplasm. The catalysed reaction is alpha-D-glucosamine 1-phosphate + acetyl-CoA = N-acetyl-alpha-D-glucosamine 1-phosphate + CoA + H(+). It carries out the reaction N-acetyl-alpha-D-glucosamine 1-phosphate + UTP + H(+) = UDP-N-acetyl-alpha-D-glucosamine + diphosphate. It functions in the pathway nucleotide-sugar biosynthesis; UDP-N-acetyl-alpha-D-glucosamine biosynthesis; N-acetyl-alpha-D-glucosamine 1-phosphate from alpha-D-glucosamine 6-phosphate (route II): step 2/2. It participates in nucleotide-sugar biosynthesis; UDP-N-acetyl-alpha-D-glucosamine biosynthesis; UDP-N-acetyl-alpha-D-glucosamine from N-acetyl-alpha-D-glucosamine 1-phosphate: step 1/1. Its pathway is bacterial outer membrane biogenesis; LPS lipid A biosynthesis. In terms of biological role, catalyzes the last two sequential reactions in the de novo biosynthetic pathway for UDP-N-acetylglucosamine (UDP-GlcNAc). The C-terminal domain catalyzes the transfer of acetyl group from acetyl coenzyme A to glucosamine-1-phosphate (GlcN-1-P) to produce N-acetylglucosamine-1-phosphate (GlcNAc-1-P), which is converted into UDP-GlcNAc by the transfer of uridine 5-monophosphate (from uridine 5-triphosphate), a reaction catalyzed by the N-terminal domain. The polypeptide is Bifunctional protein GlmU (Acetivibrio thermocellus (strain ATCC 27405 / DSM 1237 / JCM 9322 / NBRC 103400 / NCIMB 10682 / NRRL B-4536 / VPI 7372) (Clostridium thermocellum)).